The chain runs to 349 residues: FK506-binding protein-like (349 aa).

Phosphothreonine is present on threonine 3. Positions 36–55 (RQQPRDPPTETLELEVSPDP) are disordered. TPR repeat units lie at residues 210–243 (AREE…LLTL), 252–285 (TVLH…EPGH), and 286–319 (LKAL…DPKN).

Forms a ternary complex with CDKN1A/p21 and HSP90AB1/Hsp90. Ubiquitously expressed with higher levels in testis.

Its function is as follows. May be involved in response to X-ray. Regulates p21 protein stability by binding to Hsp90 and p21. The protein is FK506-binding protein-like (FKBPL) of Homo sapiens (Human).